A 123-amino-acid chain; its full sequence is MNAVTESAATTAEMPVPFVFTDAAADKVKQLIDEEGNPDLKLRVFVQGGGCSGFQYGFTFDEEVNEDDTVMNKNGVQLLIDSMSYQYLVGAEIDYKDDLNGAQFVIKNPNASTTCGCGSSFSV.

Residues cysteine 51, cysteine 115, and cysteine 117 each coordinate iron-sulfur cluster.

Belongs to the HesB/IscA family. In terms of assembly, homodimer. It depends on iron-sulfur cluster as a cofactor.

Its function is as follows. Required for insertion of 4Fe-4S clusters. In Burkholderia lata (strain ATCC 17760 / DSM 23089 / LMG 22485 / NCIMB 9086 / R18194 / 383), this protein is Putative iron-sulfur cluster insertion protein ErpA.